Consider the following 94-residue polypeptide: Alpha-conotoxin-like Vt20.1 (94 aa).

An N-terminal signal peptide occupies residues 1–25; it reads MPKLAVVLLVLLILPLSYFDAGGQA. A propeptide spanning residues 26–44 is cleaved from the precursor; sequence VQGDWRGNRLARDLQRGGR. 4-carboxyglutamate occurs at positions 47 and 49. 4 cysteine pairs are disulfide-bonded: Cys-63–Cys-72, Cys-68–Cys-80, Cys-73–Cys-90, and Cys-78–Cys-92.

Belongs to the conotoxin D superfamily. Hetero-, homo- or pseudo-homodimer (identical sequence, different post-translational modifications). As to expression, expressed by the venom duct.

The protein resides in the secreted. Functionally, alpha-conotoxins act on postsynaptic membranes, they bind to the nicotinic acetylcholine receptors (nAChR) and thus inhibit them. Through its two C-terminal domains, this homodimeric protein would bind to two nAChR allosteric sites, located outside the nAChR C-loop of the principal binding face and at the adjacent binding interface in a clockwise direction. This toxin specifically blocks mammalian neuronal nAChR of the alpha-7/CHRNA7, alpha-3-beta-2/CHRNA3-CHRNB2 and alpha-4-beta-2/CHRNA4-CHRNB2 subtypes. This is Alpha-conotoxin-like Vt20.1 from Conus planorbis (Planorbis cone).